The following is a 147-amino-acid chain: Hemoglobin subunit epsilon (147 aa).

Positions His-3–His-147 constitute a Globin domain. Residues Ser-14 and Ser-51 each carry the phosphoserine modification. The heme b site is built by His-64 and His-93.

Belongs to the globin family. As to quaternary structure, heterotetramer of two alpha chains and two epsilon chains in early embryonic hemoglobin Gower-2; two zeta chains and two epsilon chains in early embryonic hemoglobin Gower-1. In terms of tissue distribution, red blood cells.

The epsilon chain is a beta-type chain of early mammalian embryonic hemoglobin. This chain is Hemoglobin subunit epsilon (HBE1), found in Ateles belzebuth (White-bellied spider monkey).